The sequence spans 186 residues: Protein GrpE (186 aa).

The segment covering 1–13 (MSENTQPEQNQPL) has biased composition (polar residues). A disordered region spans residues 1-22 (MSENTQPEQNQPLTGAPSPEEL).

Belongs to the GrpE family. In terms of assembly, homodimer.

The protein localises to the cytoplasm. Participates actively in the response to hyperosmotic and heat shock by preventing the aggregation of stress-denatured proteins, in association with DnaK and GrpE. It is the nucleotide exchange factor for DnaK and may function as a thermosensor. Unfolded proteins bind initially to DnaJ; upon interaction with the DnaJ-bound protein, DnaK hydrolyzes its bound ATP, resulting in the formation of a stable complex. GrpE releases ADP from DnaK; ATP binding to DnaK triggers the release of the substrate protein, thus completing the reaction cycle. Several rounds of ATP-dependent interactions between DnaJ, DnaK and GrpE are required for fully efficient folding. The sequence is that of Protein GrpE from Polaromonas sp. (strain JS666 / ATCC BAA-500).